The sequence spans 93 residues: Large ribosomal subunit protein uL23cz/uL23cy (93 aa).

It belongs to the universal ribosomal protein uL23 family. In terms of assembly, part of the 50S ribosomal subunit.

The protein resides in the plastid. It localises to the chloroplast. Binds to 23S rRNA. The chain is Large ribosomal subunit protein uL23cz/uL23cy (rpl23-A) from Populus alba (White poplar).